Consider the following 75-residue polypeptide: Large ribosomal subunit protein uL29 (75 aa).

It belongs to the universal ribosomal protein uL29 family.

In Ureaplasma urealyticum serovar 10 (strain ATCC 33699 / Western), this protein is Large ribosomal subunit protein uL29.